A 305-amino-acid polypeptide reads, in one-letter code: Endonuclease 1 (305 aa).

The signal sequence occupies residues M1–S28. W29 and H34 together coordinate a divalent metal cation. W29–H34 contributes to the substrate binding site. A disulfide bridge links C38 with C69. Residues D73 and H88 each contribute to the a divalent metal cation site. Residues D73–Y79, H88–D91, and S98–R103 contribute to the substrate site. 3 disulfides stabilise this stretch: C97–C249, C105–C115, and C230–C236. Positions 122 and 139 each coordinate substrate. A glycan (N-linked (GlcNAc...) asparagine) is linked at N122. N140 is a glycosylation site (N-linked (GlcNAc...) asparagine). Residues H150, D154, H160, H184, and D188 each coordinate a divalent metal cation. The segment at H150 to N199 is substrate binding. N214 is a glycosylation site (N-linked (GlcNAc...) asparagine). Positions M287–T305 are cleaved as a propeptide — removed in mature form.

Belongs to the nuclease type I family. As to quaternary structure, monomer. It depends on Mn(2+) as a cofactor. The cofactor is Ca(2+). Mostly expressed in flowers and during leaf and stem senescence, and, to a lower extent, detectable at low levels in roots, leaves, and stems. Particularly expressed in senescing tissues in a NAC92/ORE1-dependent manner.

The catalysed reaction is Endonucleolytic cleavage to 5'-phosphomononucleotide and 5'-phosphooligonucleotide end-products.. Endonuclease that can use RNA, single-stranded and double-stranded DNA as substrates. Hydrolyzes single-stranded DNA and RNA without apparent specificity for bases during senescence. Endonuclease that recognizes and cleaves all types of mismatches with high efficiency, including heteroduplex double-stranded DNA. Maybe involved in programmed cell death (PCD) and senescence. The sequence is that of Endonuclease 1 from Arabidopsis thaliana (Mouse-ear cress).